The sequence spans 504 residues: Fumitremorgin C monooxygenase (504 aa).

A helical membrane pass occupies residues 12–32 (LGVVGASLIVILGIILLFPLG). Cysteine 442 provides a ligand contact to heme.

This sequence belongs to the cytochrome P450 family. It depends on heme as a cofactor.

The protein localises to the membrane. It carries out the reaction fumitremorgin C + 2 reduced [NADPH--hemoprotein reductase] + 2 O2 = 12alpha,13alpha-dihydroxyfumitremorgin C + 2 oxidized [NADPH--hemoprotein reductase] + 2 H2O + 2 H(+). It functions in the pathway mycotoxin biosynthesis. In terms of biological role, cytochrome P450 monooxygenase; part of the gene cluster that mediates the biosynthesis of fumitremorgins, indole alkaloids that carry not only intriguing chemical structures, but also interesting biological and pharmacological activities. The biosynthesis of fumitremorgin-type alkaloids begins by condensation of the two amino acids L-tryptophan and L-proline to brevianamide F, catalyzed by the non-ribosomal peptide synthetase ftmA. Brevianamide F is then prenylated by the prenyltransferase ftmPT1/ftmB in the presence of dimethylallyl diphosphate, resulting in the formation of tryprostatin B. The three cytochrome P450 monooxygenases, ftmP450-1/ftmC, ftmP450-2/ftmE and ftmP450-3/FtmG, are responsible for the conversion of tryprostatin B to 6-hydroxytryprostatin B, tryprostatin A to fumitremorgin C and fumitremorgin C to 12,13-dihydroxyfumitremorgin C, respectively. The putative methyltransferase ftmMT/ftmD is expected for the conversion of 6-hydroxytryprostatin B to tryprostatin A. FtmPT2/FtmH catalyzes the prenylation of 12,13-dihydroxyfumitre-morgin C in the presence of dimethylallyl diphosphate, resulting in the formation of fumitremorgin B. Fumitremorgin B is further converted to verruculogen by ftmOx1/ftmF via the insertion of an endoperoxide bond between the two prenyl moieties. In some fungal species, verruculogen is further converted to fumitremorgin A, but the enzymes involved in this step have not been identified yet. In Aspergillus fumigatus (Neosartorya fumigata), this protein is Fumitremorgin C monooxygenase.